The chain runs to 439 residues: MSGSNGSPRDLKAGGSLRGRVRVPGDKSISHRALLFGAIAEGTTTIEGLLPAEDPISTAACLRSMGTTISPIQSGEIVTIEGVGLDGLEEPSEILDCGNSGTTMRLMLGLLAGREGRHFVLTGDSSLRRRPMNRVGQPLSLLGANVRGRDHGNLAPLAVQGQRLRGAVVGTPVASAQVKSAILLAALTAEGSTSVIEPAHSRDHSERMLRAFGADLEVGGEMGRHILVRPGATLKGQHVVVPGDISSAAFWLVAGALVPGATITVENVGLNPTRTGILEVLEMMGASIEVLNRRDVAGEPVGDLQVSHGPLKAFQFGEEIMPRLVDEVPILSVAACFCDGESRISGAAELRVKETDRLAVMARQLKAMGADIDEHPDGLTIRGGHSLKGAELDSETDHRVAMSLAVAGLMAEGDSRITRSEAAAVSYPTFWDDLERLRR.

Residues Lys-27, Ser-28, and Arg-32 each coordinate 3-phosphoshikimate. Lys-27 contacts phosphoenolpyruvate. Positions 101 and 130 each coordinate phosphoenolpyruvate. 3-phosphoshikimate is bound by residues Ser-175, Gln-177, Asp-326, and Lys-353. Gln-177 serves as a coordination point for phosphoenolpyruvate. Asp-326 serves as the catalytic Proton acceptor. Phosphoenolpyruvate contacts are provided by Arg-357 and Arg-399.

Belongs to the EPSP synthase family. In terms of assembly, monomer.

It is found in the cytoplasm. It catalyses the reaction 3-phosphoshikimate + phosphoenolpyruvate = 5-O-(1-carboxyvinyl)-3-phosphoshikimate + phosphate. It functions in the pathway metabolic intermediate biosynthesis; chorismate biosynthesis; chorismate from D-erythrose 4-phosphate and phosphoenolpyruvate: step 6/7. In terms of biological role, catalyzes the transfer of the enolpyruvyl moiety of phosphoenolpyruvate (PEP) to the 5-hydroxyl of shikimate-3-phosphate (S3P) to produce enolpyruvyl shikimate-3-phosphate and inorganic phosphate. The sequence is that of 3-phosphoshikimate 1-carboxyvinyltransferase from Synechococcus sp. (strain CC9311).